Consider the following 1096-residue polypeptide: MSETPTDQSPQRMSTRNQARVNYTDMAAGNNSVEKEPVFRSPTASTRGRKKRAANVDVADLSASFGNLNNFSTPPKRGRPRGGGLGSARGGRAPMVRRTTTEESAEVDDRELVAAVKSGKKITEAVDRWIGRYNEKFLVAIAEMHQFFFAICGCKGIVTPQMSATLTYKDIICRMTEDFEEDSADYPLVHGGSLKKVRANLHNFIHTLIIRTKASMLFDSNLMDGFVQLLTGMADSQVRAFRHTATFCAMKITSALVDVTIELTQSKEKTSKQIEAEKAKLKNNSAGNEKYEALVAQRTQTEERAEEIRQIIGYLFRSVFVHRYRDVVPDIRCICIQELGHWMDVYPEHFVEDSYLKYIGWSMFDKVGDVRQRCIRALIPLFEKTLILDKLELFVNKFKDRLVSMLLDKDLETSIETVHLMRVLYTVFPTLLTIKDVVPIYELIYASNRPLAVAAGMFLNTKVFRSAEKPGKAPTAANIPLVKDLTTFFIEGDLHQHATYLVDALFESNPIVKDWATMGELLINDQYQLDSNFETKLIEILTCSVVQSATGEPPVGRHIVKKGAPSAKESRDLVEDRQRLTETLIPLIPRLITKFSSDNEKIINLVNIPLHFQLETYLSARMQTHLMELMEGLDSLIEKHLDEELLKAVAELYYHLTTNSSISALVEGHKMKLLDGVAAFIRKSMQQFDDDQMGEEEEALFVSYIKRMAAFAGFMDLRHWDLWDILLKVVSNYTREDTQRDVRERSMQMLFMQLCFDSMNIKKEGETPKADQVRKLKKRRDQLIRIVTETLNEEACGVEQAYLVICDLMILFGSQLAEESKALEPLIWRPDAMVLGNLKIFLDVNVFDVSNLDDMDQQEKIEVMHKMRQHVAQYAKLIIHGAMPVAEASHLIKRYQSHFQDFGDIFKNLLSKCREISFVETGVMICETLKTLYSQLDEDQGTDPLSESFNSIRDLAKRLGPAFGVDYAKNRFAISSLHKKAIDFAFEEYDKENHQMPKNIFFLEIAIEFSGKLLAQDKMAVVRYLNKIYTNRVGTSTVVWEPYRLYLGSLSDRNDDDNMSVRSGMTVTSNATMRSTASSTRGRGRGRGRSRIADDF.

The segment covering 1–21 (MSETPTDQSPQRMSTRNQARV) has biased composition (polar residues). Disordered stretches follow at residues 1–53 (MSET…KKRA) and 67–106 (NLNN…ESAE). Residues 261–312 (IELTQSKEKTSKQIEAEKAKLKNNSAGNEKYEALVAQRTQTEERAEEIRQII) adopt a coiled-coil conformation. Residues 320–405 (FVHRYRDVVP…NKFKDRLVSM (86 aa)) form the SCD domain. A disordered region spans residues 1057–1096 (DNMSVRSGMTVTSNATMRSTASSTRGRGRGRGRSRIADDF). Positions 1060–1073 (SVRSGMTVTSNATM) are enriched in polar residues.

Belongs to the SCC3 family. As to quaternary structure, component of the cohesin complex, composed of the smc-1 and smc-3 heterodimer attached via their hinge domain, scc-1 which links them, and scc-3. Interacts with scc-1, smc-1 and tim-1. In terms of tissue distribution, expressed in gonadal cells.

The protein resides in the nucleus. The protein localises to the chromosome. Its function is as follows. Component of the cohesin complex, a complex required for the cohesion of sister chromatids after DNA replication. The cohesin complex apparently forms a large proteinaceous ring within which sister chromatids can be trapped. At anaphase, the scc-1 subunit of the complex is cleaved and dissociates from chromatin, allowing sister chromatids to segregate. The cohesin complex may also play a role in spindle pole assembly during mitosis. Plays an essential role in cell division during embryonic development. Required for the assembly of the synaptonemal complex between homologous chromosomes to promote sister chromatid cohesion during mitosis and meiosis. Has a role in stabilization of homologous chromosome associations during meiotic synapsis. Required for chromosome segregation during mitosis and meiosis. Plays a role in DNA double-strand break (DSB) repair during meiotic recombination and promotes the assembly of the 9-1-1 cell-cycle checkpoint response complex which is required for inducing apoptosis in response to DNA damage, at DNA damage sites. The protein is Cohesin subunit scc-3 of Caenorhabditis elegans.